The following is a 67-amino-acid chain: DNA gyrase inhibitor YacG (67 aa).

Zn(2+) contacts are provided by C10, C13, C29, and C33. The segment covering 44–57 (EEKRIPSSGDRSDT) has biased composition (basic and acidic residues). Positions 44–67 (EEKRIPSSGDRSDTDGWSEEENQP) are disordered.

The protein belongs to the DNA gyrase inhibitor YacG family. As to quaternary structure, interacts with GyrB. It depends on Zn(2+) as a cofactor.

Functionally, inhibits all the catalytic activities of DNA gyrase by preventing its interaction with DNA. Acts by binding directly to the C-terminal domain of GyrB, which probably disrupts DNA binding by the gyrase. This is DNA gyrase inhibitor YacG from Cronobacter sakazakii (strain ATCC BAA-894) (Enterobacter sakazakii).